The sequence spans 531 residues: Aspartate--tRNA ligase, cytoplasmic (531 aa).

Positions 1–45 (MADAAEGEQPKLSKKELNKLARKAKKDEKAGEKGGNQQQAAAMDQ) are disordered. The span at 8 to 32 (EQPKLSKKELNKLARKAKKDEKAGE) shows a compositional bias: basic and acidic residues. Glu-259 contacts L-aspartate. The tract at residues 281-284 (QLYK) is aspartate. Residue Arg-303 participates in L-aspartate binding. ATP is bound by residues 303–305 (RAE), 311–313 (RHM), and Glu-454. Positions 457 and 461 each coordinate L-aspartate. ATP is bound at residue 502–505 (GLER).

The protein belongs to the class-II aminoacyl-tRNA synthetase family. Type 2 subfamily. As to quaternary structure, homodimer.

The protein resides in the cytoplasm. It catalyses the reaction tRNA(Asp) + L-aspartate + ATP = L-aspartyl-tRNA(Asp) + AMP + diphosphate. The chain is Aspartate--tRNA ligase, cytoplasmic from Caenorhabditis elegans.